Reading from the N-terminus, the 736-residue chain is Gingipain R2 (736 aa).

Residues 1 to 24 (MKKNFSRIVSIVAFSSLLGGMAFA) form the signal peptide. The propeptide occupies 25-229 (QPAERGRNPQ…SVFMNYEATR (205 aa)). The Ca(2+) site is built by aspartate 307, valine 329, aspartate 332, tyrosine 334, glutamate 336, glutamate 390, and histidine 395. Histidine 440 acts as the Proton donor in catalysis. The active-site Nucleophile is cysteine 473. Positions 478, 487, 521, 522, 525, 531, 613, and 639 each coordinate Ca(2+).

The protein belongs to the peptidase C25 family.

It localises to the secreted. It carries out the reaction Hydrolysis of proteins and small molecule substrates, with a preference for Arg in P1.. With respect to regulation, inhibited by human histatin-3 1/24 (histatin-5). Thiol protease. Acts synergistically with RgpA to catalyze the maturation of fimbrial subunits, such as FimA. Its proteolytic activity is a major factor in both periodontal tissue destruction and in evasion of host defense mechanisms. This is Gingipain R2 (rgpB) from Porphyromonas gingivalis (strain ATCC BAA-308 / W83).